Here is a 235-residue protein sequence, read N- to C-terminus: Probable septum site-determining protein MinC (235 aa).

Positions 104–125 are disordered; it reads KAVRPAPVEPATPSEPPQNANP. Positions 110 to 119 are enriched in pro residues; it reads PVEPATPSEP.

The protein belongs to the MinC family. As to quaternary structure, interacts with MinD and FtsZ.

In terms of biological role, cell division inhibitor that blocks the formation of polar Z ring septums. Rapidly oscillates between the poles of the cell to destabilize FtsZ filaments that have formed before they mature into polar Z rings. Prevents FtsZ polymerization. In Salmonella agona (strain SL483), this protein is Probable septum site-determining protein MinC.